Reading from the N-terminus, the 103-residue chain is Nucleoid-associated protein Anae109_3761 (103 aa).

Belongs to the YbaB/EbfC family. In terms of assembly, homodimer.

It localises to the cytoplasm. It is found in the nucleoid. Binds to DNA and alters its conformation. May be involved in regulation of gene expression, nucleoid organization and DNA protection. This is Nucleoid-associated protein Anae109_3761 from Anaeromyxobacter sp. (strain Fw109-5).